Reading from the N-terminus, the 130-residue chain is Small ribosomal subunit protein uS8 (130 aa).

This sequence belongs to the universal ribosomal protein uS8 family. As to quaternary structure, part of the 30S ribosomal subunit. Contacts proteins S5 and S12.

One of the primary rRNA binding proteins, it binds directly to 16S rRNA central domain where it helps coordinate assembly of the platform of the 30S subunit. This is Small ribosomal subunit protein uS8 from Shewanella denitrificans (strain OS217 / ATCC BAA-1090 / DSM 15013).